Reading from the N-terminus, the 121-residue chain is Small ribosomal subunit protein uS13 (121 aa).

The disordered stretch occupies residues R92 to K121. The span at K110–K121 shows a compositional bias: basic residues.

It belongs to the universal ribosomal protein uS13 family. Part of the 30S ribosomal subunit. Forms a loose heterodimer with protein S19. Forms two bridges to the 50S subunit in the 70S ribosome.

In terms of biological role, located at the top of the head of the 30S subunit, it contacts several helices of the 16S rRNA. In the 70S ribosome it contacts the 23S rRNA (bridge B1a) and protein L5 of the 50S subunit (bridge B1b), connecting the 2 subunits; these bridges are implicated in subunit movement. Contacts the tRNAs in the A and P-sites. The protein is Small ribosomal subunit protein uS13 of Mycoplasma mycoides subsp. mycoides SC (strain CCUG 32753 / NCTC 10114 / PG1).